The chain runs to 233 residues: LexA repressor (233 aa).

Positions Phe26–Thr46 form a DNA-binding region, H-T-H motif. Residues Ser154 and Lys192 each act as for autocatalytic cleavage activity in the active site.

It belongs to the peptidase S24 family. In terms of assembly, homodimer.

The catalysed reaction is Hydrolysis of Ala-|-Gly bond in repressor LexA.. In terms of biological role, represses a number of genes involved in the response to DNA damage (SOS response), including recA and lexA. In the presence of single-stranded DNA, RecA interacts with LexA causing an autocatalytic cleavage which disrupts the DNA-binding part of LexA, leading to derepression of the SOS regulon and eventually DNA repair. The protein is LexA repressor of Roseobacter denitrificans (strain ATCC 33942 / OCh 114) (Erythrobacter sp. (strain OCh 114)).